The chain runs to 768 residues: Cullin-3 (768 aa).

Position 2 is an N-acetylserine (serine 2). The interval 2-41 (SNLSKGTGSRKDTKMRIRAFPMTMDEKYVNSIWDLLKNAI) is interaction with KLHL18. Serine 585 bears the Phosphoserine mark. Residues 677 to 698 (VAAKQGESDPERKETRQKVDDD) form a disordered region. Residues 682–698 (GESDPERKETRQKVDDD) are compositionally biased toward basic and acidic residues. The Cullin neddylation domain maps to 698–760 (DRKHEIEAAI…REYLARTPED (63 aa)). Lysine 712 participates in a covalent cross-link: Glycyl lysine isopeptide (Lys-Gly) (interchain with G-Cter in NEDD8).

Belongs to the cullin family. Forms neddylation-dependent homodimers. Component of multiple BCR (BTB-CUL3-RBX1) E3 ubiquitin-protein ligase complexes formed of CUL3, RBX1 and a variable BTB domain-containing protein acting as both, adapter to cullin and substrate recognition subunit. The BCR complex may be active as a heterodimeric complex, in which NEDD8, covalently attached to one CUL3 molecule, binds to the C-terminus of a second CUL3 molecule. Interacts with RBX1, RNF7, CYCE and TIP120A/CAND1. Part of the BCR(SPOP) containing SPOP, and of BCR containing homodimeric SPOPL or the heterodimer formed by SPOP and SPOPL. Part of the probable BCR(KLHL9-KLHL13) complex with BTB domain proteins KLHL9 and KLHL13. Part of the BCR(KLHL41) complex containing KLHL41. Component of the BCR(KLHL12) E3 ubiquitin ligase complex, at least composed of CUL3 and KLHL12 and RBX1. Component of the BCR(KLHL3) E3 ubiquitin ligase complex, at least composed of CUL3 and KLHL3 and RBX1. Part of the BCR(ENC1) complex containing ENC1. Part of a complex consisting of BMI1/PCGF4, CUL3 and SPOP. Part of a complex consisting of BRMS1, CUL3 and SPOP. Component of the BCR(KLHL21) E3 ubiquitin ligase complex, at least composed of CUL3, KLHL21 and RBX1. Component of the BCR(KLHL22) E3 ubiquitin ligase complex, at least composed of CUL3, KLHL22 and RBX1. Component of the BCR(KLHL25) E3 ubiquitin ligase complex, at least composed of CUL3, KLHL25 and RBX1. Part of a complex consisting of MACROH2A1, CUL3 and SPOP. Component of the BCR(KLHL42) E3 ubiquitin ligase complex, at least composed of CUL3 and KLHL42. Component of the BCR(KBTBD8) E3 ubiquitin ligase complex, at least composed of CUL3, KBTBD8 and RBX1. Interacts with KLHL42 (via the BTB domain). Interacts with KATNA1; the interaction is enhanced by KLHL42. Interacts with KCTD5, KLHL9, KLHL11, KLHL13, GAN, ZBTB16, KLHL3, KLHL15, KLHL20, KLHL36, GMCL2, BTBD1. Part of a complex that contains CUL3, RBX1 and GAN. Interacts (via BTB domain) with KLHL17; the interaction regulates surface GRIK2 expression. Interacts with KCTD7. Part of the BCR(GAN) complex containing GAN. Part of the BCR(KEAP1) complex containing KEAP1. vInteracts with KLHL10. Interacts with KAT5 and ATF2. Interacts with KCTD17 in the BCR(KCTD17) E3 ubiquitin ligase complex, at least composed of CUL3, KCTD17 and RBX1. Interacts (when neddylated) with ARIH1; leading to activate the E3 ligase activity of ARIH1. Interacts with COPS9. Interacts with PPP2R5B; this interaction is indirect and mediated through KLHL15-binding and leads to PPP2R5B proteasomal degradation. Interacts with RBBP8/CtIP; this interaction is indirect and mediated through KLHL15-binding and leads to RBBP8 proteasomal degradation. Interacts with KLHL24 in the BCR(KLHL24) E3 ubiquitin ligase complex, composed of CUL3, RBX1 and KLHL24. Interacts with RHOBTB2. Interacts (via BTB domain) with KLHL17; the interaction regulates surface GRIK2 expression. Interacts with AURKA and KLHL18 (via BTB domain). Interacts (unneddylated form) with DCUN1D1, DCUN1D2, DCUN1D3, DCUN1D4 and DCUN1D5; these interactions promote the cullin neddylation. Component of a BCR3 (BTB-CUL3-RBX1) E3 ubiquitin ligase complex, also named Cul3-RING ubiquitin ligase complex CUL3(KBTBD6/7), composed of CUL3, RBX1, KBTBD6 and KBTBD7. Component of the BCR(KBTBD2) E3 ubiquitin ligase complex, at least composed of CUL3, KBTBD2 and RBX1. Interacts with KBTBD2 (via the BTB domain). Component of the BCR(KBTBD4) E3 ubiquitin ligase complex, at least composed of CUL3, KBTBD4 and RBX1. Post-translationally, neddylated. Attachment of NEDD8 is required for the E3 ubiquitin-protein ligase activity of the BCR complex. Deneddylated via its interaction with the COP9 signalosome (CSN) complex.

It is found in the nucleus. The protein resides in the golgi apparatus. It localises to the cell projection. The protein localises to the cilium. Its subcellular location is the flagellum. It is found in the cytoplasm. The protein resides in the cytoskeleton. It localises to the spindle. The protein localises to the microtubule organizing center. Its subcellular location is the centrosome. It is found in the spindle pole. The protein operates within protein modification; protein ubiquitination. Its function is as follows. Core component of multiple cullin-RING-based BCR (BTB-CUL3-RBX1) E3 ubiquitin-protein ligase complexes which mediate the ubiquitination and subsequent proteasomal degradation of target proteins. BCR complexes and ARIH1 collaborate in tandem to mediate ubiquitination of target proteins. As a scaffold protein may contribute to catalysis through positioning of the substrate and the ubiquitin-conjugating enzyme. The E3 ubiquitin-protein ligase activity of the complex is dependent on the neddylation of the cullin subunit and is inhibited by the association of the deneddylated cullin subunit with TIP120A/CAND1. The functional specificity of the BCR complex depends on the BTB domain-containing protein as the substrate recognition component. BCR(KLHL42) is involved in ubiquitination of KATNA1. BCR(SPOP) is involved in ubiquitination of BMI1/PCGF4, BRMS1, MACROH2A1 and DAXX, GLI2 and GLI3. Can also form a cullin-RING-based BCR (BTB-CUL3-RBX1) E3 ubiquitin-protein ligase complex containing homodimeric SPOPL or the heterodimer formed by SPOP and SPOPL; these complexes have lower ubiquitin ligase activity. BCR(KLHL9-KLHL13) controls the dynamic behavior of AURKB on mitotic chromosomes and thereby coordinates faithful mitotic progression and completion of cytokinesis. BCR(KLHL12) is involved in ER-Golgi transport by regulating the size of COPII coats, thereby playing a key role in collagen export, which is required for embryonic stem (ES) cells division: BCR(KLHL12) acts by mediating monoubiquitination of SEC31 (SEC31A or SEC31B). BCR(KLHL3) acts as a regulator of ion transport in the distal nephron; by mediating ubiquitination of WNK4. The BCR(KLHL20) E3 ubiquitin ligase complex is involved in interferon response and anterograde Golgi to endosome transport: it mediates both ubiquitination leading to degradation and 'Lys-33'-linked ubiquitination. The BCR(KLHL21) E3 ubiquitin ligase complex regulates localization of the chromosomal passenger complex (CPC) from chromosomes to the spindle midzone in anaphase and mediates the ubiquitination of AURKB. The BCR(KLHL22) ubiquitin ligase complex mediates monoubiquitination of PLK1, leading to PLK1 dissociation from phosphoreceptor proteins and subsequent removal from kinetochores, allowing silencing of the spindle assembly checkpoint (SAC) and chromosome segregation. The BCR(KLHL22) ubiquitin ligase complex is also responsible for the amino acid-stimulated 'Lys-48' polyubiquitination and proteasomal degradation of DEPDC5. Through the degradation of DEPDC5, releases the GATOR1 complex-mediated inhibition of the TORC1 pathway. The BCR(KLHL25) ubiquitin ligase complex is involved in translational homeostasis by mediating ubiquitination and subsequent degradation of hypophosphorylated EIF4EBP1 (4E-BP1). The BCR(KLHL25) ubiquitin ligase complex is also involved in lipid synthesis by mediating ubiquitination and degradation of ACLY. The BCR(KBTBD8) complex acts by mediating monoubiquitination of NOLC1 and TCOF1, leading to remodel the translational program of differentiating cells in favor of neural crest specification. Involved in ubiquitination of cyclin E and of cyclin D1 (in vitro) thus involved in regulation of G1/S transition. Involved in the ubiquitination of KEAP1, ENC1 and KLHL41. In concert with ATF2 and RBX1, promotes degradation of KAT5 thereby attenuating its ability to acetylate and activate ATM. The BCR(KCTD17) E3 ubiquitin ligase complex mediates ubiquitination and degradation of TCHP, a down-regulator of cilium assembly, thereby inducing ciliogenesis. The BCR(KLHL24) E3 ubiquitin ligase complex mediates ubiquitination of KRT14, controls KRT14 levels during keratinocytes differentiation, and is essential for skin integrity. The BCR(KLHL18) E3 ubiquitin ligase complex mediates the ubiquitination of AURKA leading to its activation at the centrosome which is required for initiating mitotic entry. The BCR(KEAP1) E3 ubiquitin ligase complex acts as a key sensor of oxidative and electrophilic stress by mediating ubiquitination and degradation of NFE2L2/NRF2, a transcription factor regulating expression of many cytoprotective genes. As part of the CUL3(KBTBD6/7) E3 ubiquitin ligase complex functions mediates 'Lys-48' ubiquitination and proteasomal degradation of TIAM1. By controlling the ubiquitination of that RAC1 guanine exchange factors (GEF), regulates RAC1 signal transduction and downstream biological processes including the organization of the cytoskeleton, cell migration and cell proliferation. The BCR(KBTBD4) E3 ubiquitin ligase complex targets CoREST corepressor complex components RCOR1, KDM1A/LSD1 and HDAC2 for proteasomal degradation with RCOR1 likely to be the primary target while degradation of KDM1A and HDAC2 is likely due to their association with RCOR1. It also targets RCOR3, MIER2 and MIER3 for proteasomal degradation as well as associated proteins ZNF217 and RREB1 with degradation being dependent on the presence of an ELM2 domain in the target proteins. The BCR(ARMC5) complex mediates premature transcription termination of transcripts that are unfavorably configured for transcriptional elongation by mediating ubiquitination of Pol II subunit POLR2A. Required for 'Lys-63'-linked ubiquitination of large ribosomal subunit protein MRPL12. In Rattus norvegicus (Rat), this protein is Cullin-3 (Cul3).